Consider the following 180-residue polypeptide: uncharacterized protein (180 aa).

Residues 1–180 (MVEFEIVKGD…KDYERALRAV (180 aa)) enclose the Macro domain.

This is an uncharacterized protein from Thermococcus kodakarensis (strain ATCC BAA-918 / JCM 12380 / KOD1) (Pyrococcus kodakaraensis (strain KOD1)).